Reading from the N-terminus, the 123-residue chain is Large ribosomal subunit protein bL12 (123 aa).

Belongs to the bacterial ribosomal protein bL12 family. Homodimer. Part of the ribosomal stalk of the 50S ribosomal subunit. Forms a multimeric L10(L12)X complex, where L10 forms an elongated spine to which 2 to 4 L12 dimers bind in a sequential fashion. Binds GTP-bound translation factors.

Functionally, forms part of the ribosomal stalk which helps the ribosome interact with GTP-bound translation factors. Is thus essential for accurate translation. This Borrelia duttonii (strain Ly) protein is Large ribosomal subunit protein bL12.